Here is a 633-residue protein sequence, read N- to C-terminus: GTPase-GDP dissociation stimulator BEM4 (633 aa).

Interacts with CDC42; the interaction is direct. Interacts with RHO1; the interaction is direct. Interacts with RHO2. Interacts with RHO4. Interacts with CDC11.

The protein resides in the nucleus. Its subcellular location is the cytoplasm. Functionally, probably acts as a GEF (guanine nucleotide exchange factor) for the Rho family of small GTP-binding proteins (G proteins) that stimulates the dissociation of GDP to enable subsequent binding of GTP. May also chaperone the processing and/or trafficking of small GTPases independently of GEF activity. Involved in the control of polarized cell growth via CDC42-mediated signaling. Involved in the control of cell-wall organization via RHO1-mediated signaling. May also function via RHO2 and RHO4. The chain is GTPase-GDP dissociation stimulator BEM4 from Saccharomyces cerevisiae (strain ATCC 204508 / S288c) (Baker's yeast).